The chain runs to 247 residues: Probable transcriptional regulatory protein GAU_0635 (247 aa).

Belongs to the TACO1 family.

It localises to the cytoplasm. This chain is Probable transcriptional regulatory protein GAU_0635, found in Gemmatimonas aurantiaca (strain DSM 14586 / JCM 11422 / NBRC 100505 / T-27).